An 863-amino-acid chain; its full sequence is Valine--tRNA ligase (863 aa).

The 'HIGH' region motif lies at 43-53 (PYPTGSFHIGH). The short motif at 517–521 (KMSKS) is the 'KMSKS' region element. Lysine 520 contributes to the ATP binding site.

This sequence belongs to the class-I aminoacyl-tRNA synthetase family. ValS type 2 subfamily.

The protein resides in the cytoplasm. The catalysed reaction is tRNA(Val) + L-valine + ATP = L-valyl-tRNA(Val) + AMP + diphosphate. In terms of biological role, catalyzes the attachment of valine to tRNA(Val). As ValRS can inadvertently accommodate and process structurally similar amino acids such as threonine, to avoid such errors, it has a 'posttransfer' editing activity that hydrolyzes mischarged Thr-tRNA(Val) in a tRNA-dependent manner. The sequence is that of Valine--tRNA ligase from Archaeoglobus fulgidus (strain ATCC 49558 / DSM 4304 / JCM 9628 / NBRC 100126 / VC-16).